The chain runs to 641 residues: Mannosyl-oligosaccharide 1,2-alpha-mannosidase IB (641 aa).

T2 carries the post-translational modification N-acetylthreonine. Residues 2-36 (TTPALLPLSGRRIPPLNLGPPSFPHHRATLRLSEK) are Cytoplasmic-facing. Residues 37–57 (FILLLILSAFITLCFGAFFFL) form a helical; Signal-anchor for type II membrane protein membrane-spanning segment. At 58–641 (PDSSKHKRFD…TTLSGNPAVR (584 aa)) the chain is on the lumenal side. The interval 153–175 (NKPLPPVPIPNLVGIRGGDPEDN) is disordered. A disulfide bridge links C462 with C494. E508 (proton donor) is an active-site residue. T619 provides a ligand contact to Ca(2+). The N-linked (GlcNAc...) asparagine glycan is linked to N631.

Belongs to the glycosyl hydrolase 47 family. The cofactor is Ca(2+). In terms of tissue distribution, highest levels of expression in placenta and testis.

The protein resides in the golgi apparatus membrane. It catalyses the reaction N(4)-(alpha-D-Man-(1-&gt;2)-alpha-D-Man-(1-&gt;2)-alpha-D-Man-(1-&gt;3)-[alpha-D-Man-(1-&gt;2)-alpha-D-Man-(1-&gt;3)-[alpha-D-Man-(1-&gt;2)-alpha-D-Man-(1-&gt;6)]-alpha-D-Man-(1-&gt;6)]-beta-D-Man-(1-&gt;4)-beta-D-GlcNAc-(1-&gt;4)-beta-D-GlcNAc)-L-asparaginyl-[protein] (N-glucan mannose isomer 9A1,2,3B1,2,3) + 4 H2O = N(4)-(alpha-D-Man-(1-&gt;3)-[alpha-D-Man-(1-&gt;3)-[alpha-D-Man-(1-&gt;6)]-alpha-D-Man-(1-&gt;6)]-beta-D-Man-(1-&gt;4)-beta-D-GlcNAc-(1-&gt;4)-beta-D-GlcNAc)-L-asparaginyl-[protein] (N-glucan mannose isomer 5A1,2) + 4 beta-D-mannose. The enzyme catalyses N(4)-(alpha-D-Man-(1-&gt;2)-alpha-D-Man-(1-&gt;2)-alpha-D-Man-(1-&gt;3)-[alpha-D-Man-(1-&gt;3)-[alpha-D-Man-(1-&gt;2)-alpha-D-Man-(1-&gt;6)]-alpha-D-Man-(1-&gt;6)]-beta-D-Man-(1-&gt;4)-beta-D-GlcNAc-(1-&gt;4)-beta-D-GlcNAc)-L-asparaginyl-[protein] (N-glucan mannose isomer 8A1,2,3B1,3) + 3 H2O = N(4)-(alpha-D-Man-(1-&gt;3)-[alpha-D-Man-(1-&gt;3)-[alpha-D-Man-(1-&gt;6)]-alpha-D-Man-(1-&gt;6)]-beta-D-Man-(1-&gt;4)-beta-D-GlcNAc-(1-&gt;4)-beta-D-GlcNAc)-L-asparaginyl-[protein] (N-glucan mannose isomer 5A1,2) + 3 beta-D-mannose. The protein operates within protein modification; protein glycosylation. Inhibited by both 1-deoxymannojirimycin and kifunensine. Involved in the maturation of Asn-linked oligosaccharides. Progressively trim alpha-1,2-linked mannose residues from Man(9)GlcNAc(2) to produce Man(5)GlcNAc(2). The sequence is that of Mannosyl-oligosaccharide 1,2-alpha-mannosidase IB (MAN1A2) from Homo sapiens (Human).